Here is a 139-residue protein sequence, read N- to C-terminus: Nucleoside diphosphate kinase (139 aa).

Lys-10, Phe-58, Arg-86, Thr-92, Arg-104, and Asn-114 together coordinate ATP. The active-site Pros-phosphohistidine intermediate is His-117.

This sequence belongs to the NDK family. In terms of assembly, homotetramer. Mg(2+) is required as a cofactor.

The protein resides in the cytoplasm. The catalysed reaction is a 2'-deoxyribonucleoside 5'-diphosphate + ATP = a 2'-deoxyribonucleoside 5'-triphosphate + ADP. It catalyses the reaction a ribonucleoside 5'-diphosphate + ATP = a ribonucleoside 5'-triphosphate + ADP. Functionally, major role in the synthesis of nucleoside triphosphates other than ATP. The ATP gamma phosphate is transferred to the NDP beta phosphate via a ping-pong mechanism, using a phosphorylated active-site intermediate. This is Nucleoside diphosphate kinase from Rhodococcus erythropolis (strain PR4 / NBRC 100887).